The sequence spans 46 residues: Pape peptide (46 aa).

A compositionally biased stretch (low complexity) spans 1–10 (KQLLKEALAP). Residues 1–46 (KQLLKEALAPEPAPKPAPEPAPEPAPEPAPEAAPEPAAAAPEAAPE) are disordered. Residues 11–33 (EPAPKPAPEPAPEPAPEPAPEAA) are compositionally biased toward pro residues. PAPE repeat units follow at residues 16 to 19 (PAPE), 20 to 23 (PAPE), 24 to 27 (PAPE), and 28 to 31 (PAPE). Over residues 34 to 46 (PEPAAAAPEAAPE) the composition is skewed to low complexity.

As to expression, expressed by the venom gland.

It localises to the secreted. The protein is Pape peptide of Tityus stigmurus (Brazilian scorpion).